The primary structure comprises 117 residues: Large ribosomal subunit protein uL18 (117 aa).

Belongs to the universal ribosomal protein uL18 family. In terms of assembly, part of the 50S ribosomal subunit; part of the 5S rRNA/L5/L18/L25 subcomplex. Contacts the 5S and 23S rRNAs.

In terms of biological role, this is one of the proteins that bind and probably mediate the attachment of the 5S RNA into the large ribosomal subunit, where it forms part of the central protuberance. The sequence is that of Large ribosomal subunit protein uL18 from Hydrogenovibrio crunogenus (strain DSM 25203 / XCL-2) (Thiomicrospira crunogena).